The primary structure comprises 138 residues: Large ribosomal subunit protein bL19 (138 aa).

Belongs to the bacterial ribosomal protein bL19 family.

This protein is located at the 30S-50S ribosomal subunit interface and may play a role in the structure and function of the aminoacyl-tRNA binding site. The polypeptide is Large ribosomal subunit protein bL19 (Rickettsia felis (strain ATCC VR-1525 / URRWXCal2) (Rickettsia azadi)).